A 249-amino-acid chain; its full sequence is MSRRKKRVTGEQALRLEFESVDHQPLIDALGVDIPRELLVLALTHRSFANENGMLPNNERLEFLGDSVLGLSVAGQLYQQYTSSPESDISKMRASIVSRYGLADIAREINLGQHILLGKGEQLHDGRSKDSILADTTEALLGAIYLAHGFEIARDTVLRLFKHKIDTASATGLHQDWKTTLQERLAERNLEMPTYTSTVTGPEHEQTFTAEVAVHGTVLGTGVGTNKKLAEQAAAHKAVGFLQDNPAFV.

Residues 21–149 enclose the RNase III domain; it reads VDHQPLIDAL…LLGAIYLAHG (129 aa). Glu62 is a binding site for Mg(2+). Asp66 is a catalytic residue. Mg(2+) contacts are provided by Asp135 and Glu138. Residue Glu138 is part of the active site. The region spanning 176–244 is the DRBM domain; sequence DWKTTLQERL…AHKAVGFLQD (69 aa).

It belongs to the ribonuclease III family. In terms of assembly, homodimer. Mg(2+) serves as cofactor.

Its subcellular location is the cytoplasm. The enzyme catalyses Endonucleolytic cleavage to 5'-phosphomonoester.. Digests double-stranded RNA. Involved in the processing of primary rRNA transcript to yield the immediate precursors to the large and small rRNAs (23S and 16S). Processes some mRNAs, and tRNAs when they are encoded in the rRNA operon. Processes pre-crRNA and tracrRNA of type II CRISPR loci if present in the organism. The chain is Ribonuclease 3 from Corynebacterium diphtheriae (strain ATCC 700971 / NCTC 13129 / Biotype gravis).